A 420-amino-acid chain; its full sequence is Argininosuccinate synthase (420 aa).

11–19 (AFSGGLDTT) is an ATP binding site. Tyrosine 88 contacts L-citrulline. ATP is bound at residue glycine 118. Residues threonine 120, asparagine 124, and aspartate 125 each contribute to the L-aspartate site. Position 124 (asparagine 124) interacts with L-citrulline. The L-citrulline site is built by arginine 128, serine 174, serine 183, glutamate 257, and tyrosine 269. The disordered stretch occupies residues 401 to 420 (KGAAVTDGSGDHAASEDTEE). The span at 409 to 420 (SGDHAASEDTEE) shows a compositional bias: basic and acidic residues.

It belongs to the argininosuccinate synthase family. Type 1 subfamily. In terms of assembly, homotetramer.

The protein resides in the cytoplasm. It carries out the reaction L-citrulline + L-aspartate + ATP = 2-(N(omega)-L-arginino)succinate + AMP + diphosphate + H(+). Its pathway is amino-acid biosynthesis; L-arginine biosynthesis; L-arginine from L-ornithine and carbamoyl phosphate: step 2/3. This Haloarcula marismortui (strain ATCC 43049 / DSM 3752 / JCM 8966 / VKM B-1809) (Halobacterium marismortui) protein is Argininosuccinate synthase.